We begin with the raw amino-acid sequence, 708 residues long: DNA-directed RNA polymerase III subunit RPC5 (708 aa).

Residues 146–155 (DAKHREREAA) are compositionally biased toward basic and acidic residues. Positions 146 to 170 (DAKHREREAANEAGDSSQDEAEDDV) are disordered. A phosphoserine mark is found at Ser161 and Ser162. Residue Lys171 forms a Glycyl lysine isopeptide (Lys-Gly) (interchain with G-Cter in SUMO2) linkage. Ser192 is subject to Phosphoserine. Tyr224 carries the post-translational modification Phosphotyrosine. Residue Lys432 forms a Glycyl lysine isopeptide (Lys-Gly) (interchain with G-Cter in SUMO2) linkage. The interval 485–552 (QLRVPAVPPG…DSFNGHPPQG (68 aa)) is disordered. A Glycyl lysine isopeptide (Lys-Gly) (interchain with G-Cter in SUMO1); alternate cross-link involves residue Lys498. Lys498 is covalently cross-linked (Glycyl lysine isopeptide (Lys-Gly) (interchain with G-Cter in SUMO2); alternate). The segment covering 502-519 (VSEEGEEDEEQEAEEEPM) has biased composition (acidic residues). Ser503 and Ser522 each carry phosphoserine. Residues 556-708 (TPVARELKAF…MWYLKGTVQS (153 aa)) are required for Pol III complex stability. Residue Lys659 forms a Glycyl lysine isopeptide (Lys-Gly) (interchain with G-Cter in SUMO2) linkage.

In terms of assembly, component of the RNA polymerase III complex consisting of at least 17 subunits: a ten-subunit horseshoe-shaped catalytic core composed of POLR3A/RPC1, POLR3B/RPC2, POLR1C/RPAC1, POLR1D/RPAC2, POLR3K/RPC10, POLR2E/RPABC1, POLR2F/RPABC2, POLR2H/RPABC3, POLR2K/RPABC4 and POLR2L/RPABC5; the stalk composed of two subunits POLR3H/RPC8 and CRCP/RPC9, forming a structural mobile part that protrudes out of the core and functions primarily in transcription initiation; and additional subunits homologous to general transcription factors of the RNA polymerase II machinery, POLR3D/RPC4-POLR3E/RPC5 heterodimer and POLR3/CRPC3-POLR3F/RPC6-POLR3G/RPC7 heterotrimer.

Its subcellular location is the nucleus. Functionally, DNA-dependent RNA polymerase catalyzes the transcription of DNA into RNA using the four ribonucleoside triphosphates as substrates. Specific peripheric component of RNA polymerase III (Pol III) which synthesizes small non-coding RNAs including 5S rRNA, snRNAs, tRNAs and miRNAs from at least 500 distinct genomic loci. Assembles with POLR3D/RPC4 forming a subcomplex that binds the Pol III core. Enables recruitment of Pol III at transcription initiation site and drives transcription initiation from both type 2 and type 3 DNA promoters. Required for efficient transcription termination and reinitiation. Plays a key role in sensing and limiting infection by intracellular bacteria and DNA viruses. Acts as a nuclear and cytosolic DNA sensor involved in innate immune response. Can sense non-self dsDNA that serves as template for transcription into dsRNA. The non-self RNA polymerase III transcripts, such as Epstein-Barr virus-encoded RNAs (EBERs) induce type I interferon and NF-kappa-B through the RIG-I pathway. This chain is DNA-directed RNA polymerase III subunit RPC5, found in Homo sapiens (Human).